The following is a 404-amino-acid chain: MRPVVADPASDAVFWPEGFTLAGINCGIKPTSKDLMLMLCDEPASTASVFTTNLCCAAPVELSKAALSASGGKMRAVICNSGNANAATGAAGMQNARLMAESTAQAFDLNAGEVLVASTGVIGQQLPVEKIAGAMPSLKATSGSTQWCDAAEAIMTTDTFPKAFGVDVKLSGGTARIAGIAKGSGMICPNMATMLAFLGTDATIEPALLQELLAAANAVSFNAITVDGDTSTNDMAAIMASGKGPEVLRGSDNARLFGEALRSVMTMLAQLIIVDGEGATKFVELRVTGAKSNEEARMAAMTVANSPLVKTAIHGEDANWGRIIAAAGRSGASFVQEELSVYFDDEPILKPGLDANFSEERAKEVMSKEEFTITLSLGKGAGRATVWTCDLSHGYIEINGSYRS.

Residues Thr156, Lys182, Thr193, Glu277, Asn399, and Ser404 each coordinate substrate. The active-site Nucleophile is Thr193.

The protein belongs to the ArgJ family. As to quaternary structure, heterotetramer of two alpha and two beta chains.

The protein localises to the cytoplasm. It carries out the reaction N(2)-acetyl-L-ornithine + L-glutamate = N-acetyl-L-glutamate + L-ornithine. The enzyme catalyses L-glutamate + acetyl-CoA = N-acetyl-L-glutamate + CoA + H(+). The protein operates within amino-acid biosynthesis; L-arginine biosynthesis; L-ornithine and N-acetyl-L-glutamate from L-glutamate and N(2)-acetyl-L-ornithine (cyclic): step 1/1. It participates in amino-acid biosynthesis; L-arginine biosynthesis; N(2)-acetyl-L-ornithine from L-glutamate: step 1/4. In terms of biological role, catalyzes two activities which are involved in the cyclic version of arginine biosynthesis: the synthesis of N-acetylglutamate from glutamate and acetyl-CoA as the acetyl donor, and of ornithine by transacetylation between N(2)-acetylornithine and glutamate. This is Arginine biosynthesis bifunctional protein ArgJ from Chlorobaculum tepidum (strain ATCC 49652 / DSM 12025 / NBRC 103806 / TLS) (Chlorobium tepidum).